Reading from the N-terminus, the 893-residue chain is TBC domain-containing protein kinase-like protein (893 aa).

The region spanning 1-274 is the Protein kinase domain; sequence MFPLRDTEMG…EELMHDHLFS (274 aa). Positions 466-651 constitute a Rab-GAP TBC domain; the sequence is DIPPLLRGIT…HLWDTLLLGN (186 aa). The 100-residue stretch at 790 to 889 folds into the Rhodanese domain; sequence SKPKLLVVDI…IKPTGLLTVP (100 aa).

The protein belongs to the protein kinase superfamily. Component of the FERRY complex.

It localises to the cytoplasm. Its subcellular location is the cytoskeleton. The protein localises to the spindle. The protein resides in the midbody. It is found in the early endosome. Functionally, component of the FERRY complex (Five-subunit Endosomal Rab5 and RNA/ribosome intermediary). The FERRY complex directly interacts with mRNAs and RAB5A, and functions as a RAB5A effector involved in the localization and the distribution of specific mRNAs most likely by mediating their endosomal transport. The complex recruits mRNAs and ribosomes to early endosomes through direct mRNA-interaction. Also involved in the modulation of mTOR signaling and expression of mTOR complex components. Involved in the control of actin-cytoskeleton organization. The protein is TBC domain-containing protein kinase-like protein of Gallus gallus (Chicken).